Reading from the N-terminus, the 284-residue chain is Diaminopimelate epimerase (284 aa).

Substrate-binding residues include Asn14 and Asn67. Cys76 serves as the catalytic Proton donor. Residues 77–78 (GN), Asn166, Asn199, and 217–218 (ER) contribute to the substrate site. Cys226 functions as the Proton acceptor in the catalytic mechanism. 227-228 (GT) contacts substrate.

This sequence belongs to the diaminopimelate epimerase family. Homodimer.

Its subcellular location is the cytoplasm. The catalysed reaction is (2S,6S)-2,6-diaminopimelate = meso-2,6-diaminopimelate. It participates in amino-acid biosynthesis; L-lysine biosynthesis via DAP pathway; DL-2,6-diaminopimelate from LL-2,6-diaminopimelate: step 1/1. Catalyzes the stereoinversion of LL-2,6-diaminopimelate (L,L-DAP) to meso-diaminopimelate (meso-DAP), a precursor of L-lysine and an essential component of the bacterial peptidoglycan. The sequence is that of Diaminopimelate epimerase from Bacillus pumilus (strain SAFR-032).